Reading from the N-terminus, the 258-residue chain is Phosphate import ATP-binding protein PstB 2 (258 aa).

The 242-residue stretch at 12-253 (IQVRDLNFYY…PQQKQTEDYI (242 aa)) folds into the ABC transporter domain. Residue 44-51 (GPSGCGKS) coordinates ATP.

The protein belongs to the ABC transporter superfamily. Phosphate importer (TC 3.A.1.7) family. The complex is composed of two ATP-binding proteins (PstB), two transmembrane proteins (PstC and PstA) and a solute-binding protein (PstS).

The protein resides in the cell inner membrane. It catalyses the reaction phosphate(out) + ATP + H2O = ADP + 2 phosphate(in) + H(+). Functionally, part of the ABC transporter complex PstSACB involved in phosphate import. Responsible for energy coupling to the transport system. The protein is Phosphate import ATP-binding protein PstB 2 of Yersinia pestis bv. Antiqua (strain Nepal516).